A 53-amino-acid chain; its full sequence is FHVPDDRPCIKPGRCPLVPDATCTFVCKAADNDFGYECQHVWTFEGQRVGCYA.

Disulfide bonds link cysteine 9-cysteine 23, cysteine 15-cysteine 51, and cysteine 27-cysteine 38. Alanine 53 provides a ligand contact to Zn(2+).

In terms of biological role, metallocarboxypeptidase inhibitor. Has an inhibitory effect on bovine CPA1 and porcine CPB1. Does not inhibit D.melanogaster svr (carboxypeptidase D). Shows no activity against serine proteases subtilisin or bovine trypsin, cysteine protease papain, and aspartyl protease porcine pepsin. The chain is Metallocarboxypeptidase inhibitor b from Nerita versicolor (Four-tooth nerite).